The following is a 332-amino-acid chain: Glycerol-3-phosphate dehydrogenase [NAD(P)+] (332 aa).

Residues tryptophan 13, arginine 33, and lysine 105 each contribute to the NADPH site. Residues lysine 105, glycine 134, and serine 136 each contribute to the sn-glycerol 3-phosphate site. NADPH is bound at residue alanine 138. The sn-glycerol 3-phosphate site is built by lysine 189, aspartate 242, serine 252, arginine 253, and asparagine 254. The active-site Proton acceptor is the lysine 189. Arginine 253 provides a ligand contact to NADPH. Glutamate 279 lines the NADPH pocket.

The protein belongs to the NAD-dependent glycerol-3-phosphate dehydrogenase family.

The protein resides in the cytoplasm. The enzyme catalyses sn-glycerol 3-phosphate + NAD(+) = dihydroxyacetone phosphate + NADH + H(+). It catalyses the reaction sn-glycerol 3-phosphate + NADP(+) = dihydroxyacetone phosphate + NADPH + H(+). It functions in the pathway membrane lipid metabolism; glycerophospholipid metabolism. Functionally, catalyzes the reduction of the glycolytic intermediate dihydroxyacetone phosphate (DHAP) to sn-glycerol 3-phosphate (G3P), the key precursor for phospholipid synthesis. The chain is Glycerol-3-phosphate dehydrogenase [NAD(P)+] from Halorhodospira halophila (strain DSM 244 / SL1) (Ectothiorhodospira halophila (strain DSM 244 / SL1)).